A 176-amino-acid chain; its full sequence is Prenylated Rab acceptor 1 (176 aa).

M1 carries the post-translational modification N-acetylmethionine. The SKL peroxisome targeting motif motif lies at 11 to 13; the sequence is SRF. S18 carries the post-translational modification Phosphoserine. 2 consecutive transmembrane segments (helical) span residues 84-104 and 129-149; these read LLTN…IVGI and VCVA…LWLI.

Belongs to the PRA1 family. In terms of assembly, interacts with YIP1 and the Rab GTPases SEC4, YPT1, YPT6, YPT10, YPT11, YPT31, YPT32 and YPT52.

The protein localises to the golgi apparatus membrane. The protein resides in the peroxisome membrane. This chain is Prenylated Rab acceptor 1 (YIP3), found in Saccharomyces cerevisiae (strain ATCC 204508 / S288c) (Baker's yeast).